Consider the following 256-residue polypeptide: Thiazole synthase (256 aa).

Lysine 95 serves as the catalytic Schiff-base intermediate with DXP. 1-deoxy-D-xylulose 5-phosphate is bound by residues glycine 156, 182-183 (AG), and 204-205 (NT).

Belongs to the ThiG family. As to quaternary structure, homotetramer. Forms heterodimers with either ThiH or ThiS.

It is found in the cytoplasm. It catalyses the reaction [ThiS sulfur-carrier protein]-C-terminal-Gly-aminoethanethioate + 2-iminoacetate + 1-deoxy-D-xylulose 5-phosphate = [ThiS sulfur-carrier protein]-C-terminal Gly-Gly + 2-[(2R,5Z)-2-carboxy-4-methylthiazol-5(2H)-ylidene]ethyl phosphate + 2 H2O + H(+). It participates in cofactor biosynthesis; thiamine diphosphate biosynthesis. Catalyzes the rearrangement of 1-deoxy-D-xylulose 5-phosphate (DXP) to produce the thiazole phosphate moiety of thiamine. Sulfur is provided by the thiocarboxylate moiety of the carrier protein ThiS. In vitro, sulfur can be provided by H(2)S. The chain is Thiazole synthase from Escherichia coli (strain 55989 / EAEC).